Consider the following 120-residue polypeptide: Large ribosomal subunit protein uL18 (120 aa).

The protein belongs to the universal ribosomal protein uL18 family. In terms of assembly, part of the 50S ribosomal subunit; part of the 5S rRNA/L5/L18/L25 subcomplex. Contacts the 5S and 23S rRNAs.

In terms of biological role, this is one of the proteins that bind and probably mediate the attachment of the 5S RNA into the large ribosomal subunit, where it forms part of the central protuberance. The protein is Large ribosomal subunit protein uL18 of Brucella anthropi (strain ATCC 49188 / DSM 6882 / CCUG 24695 / JCM 21032 / LMG 3331 / NBRC 15819 / NCTC 12168 / Alc 37) (Ochrobactrum anthropi).